The following is a 519-amino-acid chain: Putative cytochrome P450 CYP13A10 (519 aa).

Residues Val-3–Trp-23 traverse the membrane as a helical segment. Position 465 (Cys-465) interacts with heme.

Belongs to the cytochrome P450 family. Heme serves as cofactor.

The protein localises to the membrane. In terms of biological role, cytochromes P450 are a group of heme-thiolate monooxygenases. They oxidize a variety of structurally unrelated compounds, including steroids, fatty acids, and xenobiotics. The chain is Putative cytochrome P450 CYP13A10 (cyp-13A10) from Caenorhabditis elegans.